The following is a 341-amino-acid chain: tRNA N6-adenosine threonylcarbamoyltransferase (341 aa).

2 residues coordinate Fe cation: His114 and His118. Residues Leu136–Gly140, Asp170, Gly183, Asp187, and Asn275 each bind substrate. Residue Asp303 participates in Fe cation binding.

The protein belongs to the KAE1 / TsaD family. Fe(2+) is required as a cofactor.

The protein resides in the cytoplasm. The catalysed reaction is L-threonylcarbamoyladenylate + adenosine(37) in tRNA = N(6)-L-threonylcarbamoyladenosine(37) in tRNA + AMP + H(+). In terms of biological role, required for the formation of a threonylcarbamoyl group on adenosine at position 37 (t(6)A37) in tRNAs that read codons beginning with adenine. Is involved in the transfer of the threonylcarbamoyl moiety of threonylcarbamoyl-AMP (TC-AMP) to the N6 group of A37, together with TsaE and TsaB. TsaD likely plays a direct catalytic role in this reaction. The chain is tRNA N6-adenosine threonylcarbamoyltransferase from Mycobacterium avium (strain 104).